A 1447-amino-acid chain; its full sequence is DNA-directed RNA polymerase subunit beta' (1447 aa).

Residues Cys-70, Cys-72, Cys-85, and Cys-88 each coordinate Zn(2+). Mg(2+) is bound by residues Asp-460, Asp-462, and Asp-464. Zn(2+) contacts are provided by Cys-890, Cys-964, Cys-971, and Cys-974.

Belongs to the RNA polymerase beta' chain family. The RNAP catalytic core consists of 2 alpha, 1 beta, 1 beta' and 1 omega subunit. When a sigma factor is associated with the core the holoenzyme is formed, which can initiate transcription. It depends on Mg(2+) as a cofactor. Requires Zn(2+) as cofactor.

The enzyme catalyses RNA(n) + a ribonucleoside 5'-triphosphate = RNA(n+1) + diphosphate. DNA-dependent RNA polymerase catalyzes the transcription of DNA into RNA using the four ribonucleoside triphosphates as substrates. In Desulfosudis oleivorans (strain DSM 6200 / JCM 39069 / Hxd3) (Desulfococcus oleovorans), this protein is DNA-directed RNA polymerase subunit beta'.